We begin with the raw amino-acid sequence, 155 residues long: Large ribosomal subunit protein bL17 (155 aa).

The protein belongs to the bacterial ribosomal protein bL17 family. In terms of assembly, part of the 50S ribosomal subunit. Contacts protein L32.

The polypeptide is Large ribosomal subunit protein bL17 (Bifidobacterium adolescentis (strain ATCC 15703 / DSM 20083 / NCTC 11814 / E194a)).